The chain runs to 434 residues: Cytochrome b-c1 complex subunit 2, mitochondrial (434 aa).

A mitochondrion-targeting transit peptide spans 1-31; sequence MYSLNRLPRSAAFKSSANLLRRNASTTSAGG.

Belongs to the peptidase M16 family. UQCRC2/QCR2 subfamily. As to quaternary structure, component of the ubiquinol-cytochrome c oxidoreductase (cytochrome b-c1 complex, complex III, CIII), a multisubunit enzyme composed of 10 subunits. The complex is composed of 3 respiratory subunits cytochrome b (COB), cytochrome c1 (CYT1) and Rieske protein (RIP1), 2 core protein subunits COR1 and QCR2, and 5 low-molecular weight protein subunits QCR6, QCR7, QCR8, QCR9 and QCR10. The complex exists as an obligatory dimer and forms supercomplexes (SCs) in the inner mitochondrial membrane with a monomer or a dimer of cytochrome c oxidase (complex IV, CIV), resulting in 2 different assemblies (supercomplexes III(2)IV and III(2)IV(2)). Interacts with MRJ1.

It is found in the mitochondrion inner membrane. Functionally, component of the ubiquinol-cytochrome c oxidoreductase, a multisubunit transmembrane complex that is part of the mitochondrial electron transport chain which drives oxidative phosphorylation. The respiratory chain contains 3 multisubunit complexes succinate dehydrogenase (complex II, CII), ubiquinol-cytochrome c oxidoreductase (cytochrome b-c1 complex, complex III, CIII) and cytochrome c oxidase (complex IV, CIV), that cooperate to transfer electrons derived from NADH and succinate to molecular oxygen, creating an electrochemical gradient over the inner membrane that drives transmembrane transport and the ATP synthase. The cytochrome b-c1 complex catalyzes electron transfer from ubiquinol to cytochrome c, linking this redox reaction to translocation of protons across the mitochondrial inner membrane, with protons being carried across the membrane as hydrogens on the quinol. In the process called Q cycle, 2 protons are consumed from the matrix, 4 protons are released into the intermembrane space and 2 electrons are passed to cytochrome c. In Cryptococcus neoformans var. grubii serotype A (strain H99 / ATCC 208821 / CBS 10515 / FGSC 9487) (Filobasidiella neoformans var. grubii), this protein is Cytochrome b-c1 complex subunit 2, mitochondrial.